Reading from the N-terminus, the 211-residue chain is NADH-quinone oxidoreductase subunit C (211 aa).

Belongs to the complex I 30 kDa subunit family. NDH-1 is composed of 14 different subunits. Subunits NuoB, C, D, E, F, and G constitute the peripheral sector of the complex.

The protein resides in the cell inner membrane. It carries out the reaction a quinone + NADH + 5 H(+)(in) = a quinol + NAD(+) + 4 H(+)(out). In terms of biological role, NDH-1 shuttles electrons from NADH, via FMN and iron-sulfur (Fe-S) centers, to quinones in the respiratory chain. The immediate electron acceptor for the enzyme in this species is believed to be ubiquinone. Couples the redox reaction to proton translocation (for every two electrons transferred, four hydrogen ions are translocated across the cytoplasmic membrane), and thus conserves the redox energy in a proton gradient. The sequence is that of NADH-quinone oxidoreductase subunit C from Azorhizobium caulinodans (strain ATCC 43989 / DSM 5975 / JCM 20966 / LMG 6465 / NBRC 14845 / NCIMB 13405 / ORS 571).